We begin with the raw amino-acid sequence, 312 residues long: R2-like ligand binding oxidase (312 aa).

Mn(2+) is bound by residues Glu-68, Glu-101, and His-104. The 3-(O4'-tyrosyl)-valine (Val-Tyr) cross-link spans 71 to 162; the sequence is VTQDIQPFMA…AAQVRASVTY (92 aa). Glu-101 is a Fe cation binding site. Fe cation contacts are provided by Glu-167, Glu-202, and His-205.

Belongs to the ribonucleoside diphosphate reductase small chain family. R2-like ligand binding oxidase subfamily. As to quaternary structure, homodimer. Fe cation is required as a cofactor. The cofactor is Mn(2+).

Probable oxidase that might be involved in lipid metabolism. The sequence is that of R2-like ligand binding oxidase from Mycolicibacterium vanbaalenii (strain DSM 7251 / JCM 13017 / BCRC 16820 / KCTC 9966 / NRRL B-24157 / PYR-1) (Mycobacterium vanbaalenii).